The sequence spans 348 residues: uncharacterized protein (348 aa).

The interval 132–348 (SECRRSSDAL…QGTRRDSARL (217 aa)) is disordered. The segment covering 161 to 178 (STAPIPNAAISSARSSAR) has biased composition (low complexity). A compositionally biased stretch (polar residues) spans 192-207 (SRSSSETRSPGGTVQP). A compositionally biased stretch (low complexity) spans 227-273 (AAGSLLPAPRPPASSASSPQAAAPAAPSATRLPRRTTPSAPRPSSRP). Pro residues predominate over residues 274–287 (ARPPIPAARPPPRR). The segment covering 288–310 (TPGTPRPAAARARAPAGCSPARR) has biased composition (low complexity).

This is an uncharacterized protein from Streptomyces fradiae (Streptomyces roseoflavus).